We begin with the raw amino-acid sequence, 35 residues long: Malate dehydrogenase, mitochondrial (35 aa).

Residue Asn7 coordinates NAD(+). Position 23 (Arg23) interacts with substrate.

This sequence belongs to the LDH/MDH superfamily. MDH type 1 family. As to quaternary structure, homodimer.

The protein resides in the mitochondrion matrix. The catalysed reaction is (S)-malate + NAD(+) = oxaloacetate + NADH + H(+). The polypeptide is Malate dehydrogenase, mitochondrial (Capsicum annuum var. annuum (Red pepper)).